A 536-amino-acid polypeptide reads, in one-letter code: Proto-oncogene tyrosine-protein kinase Src (536 aa).

Positions 1-53 (MGSNKSKPKDASQRRRSLEPAENVHGAGGGAFPASQTPSKPASADGHRGPSAA) are disordered. A lipid anchor (N-myristoyl glycine) is attached at G2. The segment covering 7-19 (KPKDASQRRRSLE) has biased composition (basic and acidic residues). At S17 the chain carries Phosphoserine. At S75 the chain carries Phosphoserine; by CDK5. The SH3 domain maps to 84 to 145 (GGVTTFVALY…PSNYVAPSDS (62 aa)). An SH2 domain is found at 151 to 248 (WYFGKITRRE…GLCHRLTTVC (98 aa)). Y187 bears the Phosphotyrosine mark. The Protein kinase domain occupies 270–523 (LRLEVKLGQG…YLQAFLEDYF (254 aa)). ATP is bound by residues 276–284 (LGQGCFGEV) and K298. D389 acts as the Proton acceptor in catalysis. Y419 carries the post-translational modification Phosphotyrosine; by autocatalysis. At Y419 the chain carries Phosphotyrosine; by FAK2. Position 530 is a phosphotyrosine; by CSK (Y530).

Belongs to the protein kinase superfamily. Tyr protein kinase family. SRC subfamily. As to quaternary structure, part of a complex comprised of PTPRA, BCAR1, BCAR3 (via SH2 domain) and SRC; the formation of the complex is dependent on integrin mediated-tyrosine phosphorylation of PTPRA. Interacts with DDEF1/ASAP1; via the SH3 domain. Interacts with CCPG1. Identified in a complex containing FGFR4, NCAM1, CDH2, PLCG1, FRS2, SRC, SHC1, GAP43 and CTTN. Interacts with ERBB2, STAT1 and PNN. Interacts with DDR1, DDR2 and DAB2. Interacts with CDCP1, TGFB1I1 and TOM1L2. Interacts with the cytoplasmic domain of MUC1, phosphorylates it and increases binding of MUC1 with beta-catenin. Interacts with RALGPS1; via the SH3 domain. Interacts with CAV2 (tyrosine phosphorylated form). Interacts (via the SH3 domain and the protein kinase domain) with ARRB1; the interaction is independent of the phosphorylation state of SRC C-terminus. Interacts with ARRB1 and ARRB2. Interacts with SRCIN1. Interacts with NDFIP2 and more weakly with NDFIP1. Interacts with PIK3CA and/or PIK3C2B, PTK2/FAK1 and ESR1 (dimethylated on arginine). Interacts with FASLG. Interacts (via SH2 domain) with the 'Tyr-402' phosphorylated form of PTK2B/PYK2. Interacts (via SH2 domain) with FLT3 (tyrosine phosphorylated). Interacts with PDGFRA (tyrosine phosphorylated). Interacts with CSF1R. Interacts (via SH2 and SH3 domain) with TNK2. Interacts (via protein kinase domain) with the tyrosine phosphorylated form of RUNX3 (via runt domain). Interacts with TRAF3 (via RING-type zinc finger domain). Interacts with RIGI, MAVS and TBK1. Interacts (via SH2 domain) with RACK1; the interaction is enhanced by tyrosine phosphorylation of RACK1 and inhibits SRC activity. Interacts with EPHB1; activates the MAPK/ERK cascade to regulate cell migration. Interacts with FCAMR. Interacts (via SH2 domain) with the 'Tyr-9' phosphorylated form of PDPK1. Interacts with AMOTL2; this interaction regulates the translocation of phosphorylated SRC to peripheral cell-matrix adhesion sites. Interacts with TRAP1. Interacts with CBLC; the interaction is enhanced when SRC is phosphorylated at Tyr-419. Interacts with ARHGEF5. Interacts (via cytoplasmic domain) with CEACAM1 (via SH2 domain); this interaction is regulated by trans-homophilic cell adhesion. Interacts with MPP2. Interacts with PRR7. Interacts (via kinase domain and to a lesser extent the SH2 domain) directly with PDLIM4; this interaction results in PTPN13-mediated dephosphorylation of this protein leading to its inactivation. Interacts with P85 (PIK3R1 or PIK3R2). Interacts with HNRNPA2B1. Interacts with IL6ST/gp130. Interacts (via SH3 domain) with PELP1 in the presence of 17-beta-estradiol. Interacts with AMBRA1. In terms of assembly, (Microbial infection) Interacts with HEV ORF3 protein; via the SH3 domain. (Microbial infection) Interacts (via SH2 domain) with HCV non-structural protein 5A (via N-terminus). In terms of processing, myristoylated at Gly-2, and this is essential for targeting to membranes. Post-translationally, dephosphorylated at Tyr-530 by PTPRJ. Phosphorylated on Tyr-530 by c-Src kinase (CSK). The phosphorylated form is termed pp60c-src. Dephosphorylated by PTPRJ at Tyr-419. Normally maintained in an inactive conformation with the SH2 domain engaged with Tyr-530, the SH3 domain engaged with the SH2-kinase linker, and Tyr-419 dephosphorylated. Dephosphorylation of Tyr-530 as a result of protein tyrosine phosphatase (PTP) action disrupts the intramolecular interaction between the SH2 domain and Tyr-530, Tyr-419 can then become autophosphorylated, resulting in SRC activation. Phosphorylation of Tyr-530 by CSK allows this interaction to reform, resulting in SRC inactivation. CDK5-mediated phosphorylation at Ser-75 targets SRC to ubiquitin-dependent degradation and thus leads to cytoskeletal reorganization. Phosphorylated by PTK2/FAK1; this enhances kinase activity. Phosphorylated by PTK2B/PYK2; this enhances kinase activity. Upon activation of IL6ST by IL6, Tyr-419 is phosphorylated and Tyr-530 dephosphorylated. Displays reduced levels of autophosphorylation at Tyr-419 compared to isoforms 2 and 3. In terms of processing, displays enhanced levels of autophosphorylation at Tyr-419 compared to isoform 1. Post-translationally, displays enhanced levels of autophosphorylation at Tyr-419 compared to isoform 1. Shows reduced phosphorylation at Tyr-527 compared to isoforms 1 and 2. S-nitrosylation is important for activation of its kinase activity. In terms of processing, ubiquitinated in response to CDK5-mediated phosphorylation. Ubiquitination mediated by CBLC requires SRC autophosphorylation at Tyr-419 and may lead to lysosomal degradation. Expressed ubiquitously. Expressed in the skin (at protein level). Platelets, neurons and osteoclasts express 5-fold to 200-fold higher levels than most other tissues. In terms of tissue distribution, expressed in spleen and liver. As to expression, expressed in brain.

The protein resides in the cell membrane. It localises to the mitochondrion inner membrane. It is found in the nucleus. The protein localises to the cytoplasm. Its subcellular location is the cytoskeleton. The protein resides in the perinuclear region. It localises to the cell junction. It is found in the focal adhesion. It catalyses the reaction L-tyrosyl-[protein] + ATP = O-phospho-L-tyrosyl-[protein] + ADP + H(+). Phosphorylation by CSK at Tyr-530 inhibits kinase activity. Inhibitory phosphorylation at Tyr-530 is enhanced by heme. Further phosphorylation by CDK1 partially reactivates CSK-inactivated SRC and facilitates complete reactivation by protein tyrosine phosphatase PTPRC. Integrin engagement stimulates kinase activity. Phosphorylation by PTK2/FAK1 enhances kinase activity. Butein and pseudosubstrate-based peptide inhibitors like CIYKYYF act as inhibitors. Phosphorylation at Tyr-419 increases kinase activity. In terms of biological role, non-receptor protein tyrosine kinase which is activated following engagement of many different classes of cellular receptors including immune response receptors, integrins and other adhesion receptors, receptor protein tyrosine kinases, G protein-coupled receptors as well as cytokine receptors. Participates in signaling pathways that control a diverse spectrum of biological activities including gene transcription, immune response, cell adhesion, cell cycle progression, apoptosis, migration, and transformation. Due to functional redundancy between members of the SRC kinase family, identification of the specific role of each SRC kinase is very difficult. SRC appears to be one of the primary kinases activated following engagement of receptors and plays a role in the activation of other protein tyrosine kinase (PTK) families. Receptor clustering or dimerization leads to recruitment of SRC to the receptor complexes where it phosphorylates the tyrosine residues within the receptor cytoplasmic domains. Plays an important role in the regulation of cytoskeletal organization through phosphorylation of specific substrates such as AFAP1. Phosphorylation of AFAP1 allows the SRC SH2 domain to bind AFAP1 and to localize to actin filaments. Cytoskeletal reorganization is also controlled through the phosphorylation of cortactin (CTTN). When cells adhere via focal adhesions to the extracellular matrix, signals are transmitted by integrins into the cell resulting in tyrosine phosphorylation of a number of focal adhesion proteins, including PTK2/FAK1 and paxillin (PXN). In addition to phosphorylating focal adhesion proteins, SRC is also active at the sites of cell-cell contact adherens junctions and phosphorylates substrates such as beta-catenin (CTNNB1), delta-catenin (CTNND1), and plakoglobin (JUP). Another type of cell-cell junction, the gap junction, is also a target for SRC, which phosphorylates connexin-43 (GJA1). SRC is implicated in regulation of pre-mRNA-processing and phosphorylates RNA-binding proteins such as KHDRBS1. Phosphorylates PKP3 at 'Tyr-195' in response to reactive oxygen species, which may cause the release of PKP3 from desmosome cell junctions into the cytoplasm. Also plays a role in PDGF-mediated tyrosine phosphorylation of both STAT1 and STAT3, leading to increased DNA binding activity of these transcription factors. Involved in the RAS pathway through phosphorylation of RASA1 and RASGRF1. Plays a role in EGF-mediated calcium-activated chloride channel activation. Required for epidermal growth factor receptor (EGFR) internalization through phosphorylation of clathrin heavy chain (CLTC and CLTCL1) at 'Tyr-1477'. Involved in beta-arrestin (ARRB1 and ARRB2) desensitization through phosphorylation and activation of GRK2, leading to beta-arrestin phosphorylation and internalization. Has a critical role in the stimulation of the CDK20/MAPK3 mitogen-activated protein kinase cascade by epidermal growth factor. Might be involved not only in mediating the transduction of mitogenic signals at the level of the plasma membrane but also in controlling progression through the cell cycle via interaction with regulatory proteins in the nucleus. Plays an important role in osteoclastic bone resorption in conjunction with PTK2B/PYK2. Both the formation of a SRC-PTK2B/PYK2 complex and SRC kinase activity are necessary for this function. Recruited to activated integrins by PTK2B/PYK2, thereby phosphorylating CBL, which in turn induces the activation and recruitment of phosphatidylinositol 3-kinase to the cell membrane in a signaling pathway that is critical for osteoclast function. Promotes energy production in osteoclasts by activating mitochondrial cytochrome C oxidase. Phosphorylates DDR2 on tyrosine residues, thereby promoting its subsequent autophosphorylation. Phosphorylates RUNX3 and COX2 on tyrosine residues, TNK2 on 'Tyr-284' and CBL on 'Tyr-731'. Enhances RIGI-elicited antiviral signaling. Phosphorylates PDPK1 at 'Tyr-9', 'Tyr-373' and 'Tyr-376'. Phosphorylates BCAR1 at 'Tyr-128'. Phosphorylates CBLC at multiple tyrosine residues, phosphorylation at 'Tyr-341' activates CBLC E3 activity. Phosphorylates synaptic vesicle protein synaptophysin (SYP). Involved in anchorage-independent cell growth. Required for podosome formation. Mediates IL6 signaling by activating YAP1-NOTCH pathway to induce inflammation-induced epithelial regeneration. Phosphorylates OTUB1, promoting deubiquitination of RPTOR. Phosphorylates caspase CASP8 at 'Tyr-380' which negatively regulates CASP8 processing and activation, down-regulating CASP8 proapoptotic function. Non-receptor protein tyrosine kinase which phosphorylates synaptophysin with high affinity. Functionally, non-receptor protein tyrosine kinase which shows higher basal kinase activity than isoform 1, possibly due to weakened intramolecular interactions which enhance autophosphorylation of Tyr-419 and subsequent activation. The SH3 domain shows reduced affinity with the linker sequence between the SH2 and kinase domains which may account for the increased basal activity. Displays altered substrate specificity compared to isoform 1, showing weak affinity for synaptophysin and for peptide substrates containing class I or class II SH3 domain-binding motifs. Plays a role in L1CAM-mediated neurite elongation, possibly by acting downstream of L1CAM to drive cytoskeletal rearrangements involved in neurite outgrowth. Its function is as follows. Non-receptor protein tyrosine kinase which shows higher basal kinase activity than isoform 1, possibly due to weakened intramolecular interactions which enhance autophosphorylation of Tyr-419 and subsequent activation. The SH3 domain shows reduced affinity with the linker sequence between the SH2 and kinase domains which may account for the increased basal activity. Displays altered substrate specificity compared to isoform 1, showing weak affinity for synaptophysin and for peptide substrates containing class I or class II SH3 domain-binding motifs. Plays a role in neurite elongation. The sequence is that of Proto-oncogene tyrosine-protein kinase Src from Homo sapiens (Human).